The primary structure comprises 342 residues: tRNA N6-adenosine threonylcarbamoyltransferase (342 aa).

2 residues coordinate Fe cation: His-111 and His-115. Substrate contacts are provided by residues 133–137, Asp-166, Gly-179, Asp-183, and Asn-273; that span reads AVSGG. Asp-301 serves as a coordination point for Fe cation.

Belongs to the KAE1 / TsaD family. Fe(2+) serves as cofactor.

The protein localises to the cytoplasm. It catalyses the reaction L-threonylcarbamoyladenylate + adenosine(37) in tRNA = N(6)-L-threonylcarbamoyladenosine(37) in tRNA + AMP + H(+). Functionally, required for the formation of a threonylcarbamoyl group on adenosine at position 37 (t(6)A37) in tRNAs that read codons beginning with adenine. Is involved in the transfer of the threonylcarbamoyl moiety of threonylcarbamoyl-AMP (TC-AMP) to the N6 group of A37, together with TsaE and TsaB. TsaD likely plays a direct catalytic role in this reaction. In Syntrophotalea carbinolica (strain DSM 2380 / NBRC 103641 / GraBd1) (Pelobacter carbinolicus), this protein is tRNA N6-adenosine threonylcarbamoyltransferase.